Reading from the N-terminus, the 971-residue chain is Exportin-2 (971 aa).

Residues 29 to 102 (AEKFLESVEG…KANIVNLMLS (74 aa)) form the Importin N-terminal domain.

The protein belongs to the XPO2/CSE1 family. In terms of assembly, interacts with cftr.

It localises to the cytoplasm. Its subcellular location is the nucleus. Functionally, export receptor for importin alpha. Mediates importin-alpha re-export from the nucleus to the cytoplasm after import substrates have been released into the nucleoplasm. Negatively regulates fluid secretion and plays a role in fluid homeostasis by down-regulating cftr activity. This chain is Exportin-2 (cse1l), found in Oreochromis niloticus (Nile tilapia).